A 74-amino-acid chain; its full sequence is uncharacterized protein (74 aa).

The chain crosses the membrane as a helical span at residues 8-30 (LAAAVSSSAASAGVSRIAASAMA).

The protein localises to the mitochondrion outer membrane. This is an uncharacterized protein from Saccharomyces cerevisiae (strain ATCC 204508 / S288c) (Baker's yeast).